Reading from the N-terminus, the 130-residue chain is Serum amyloid A-4 protein (130 aa).

Positions Met-1–Ser-18 are cleaved as a signal peptide. A glycan (N-linked (GlcNAc...) asparagine; partial) is linked at Asn-94. Residues Asp-101–Tyr-130 form a disordered region.

It belongs to the SAA family. In terms of assembly, apolipoprotein of the HDL complex. In terms of tissue distribution, expressed by the liver; secreted in plasma.

The protein resides in the secreted. In terms of biological role, major acute phase reactant. The sequence is that of Serum amyloid A-4 protein from Homo sapiens (Human).